The sequence spans 207 residues: 3-isopropylmalate dehydratase small subunit (207 aa).

The protein belongs to the LeuD family. LeuD type 1 subfamily. In terms of assembly, heterodimer of LeuC and LeuD.

It carries out the reaction (2R,3S)-3-isopropylmalate = (2S)-2-isopropylmalate. It participates in amino-acid biosynthesis; L-leucine biosynthesis; L-leucine from 3-methyl-2-oxobutanoate: step 2/4. Its function is as follows. Catalyzes the isomerization between 2-isopropylmalate and 3-isopropylmalate, via the formation of 2-isopropylmaleate. This chain is 3-isopropylmalate dehydratase small subunit, found in Gluconacetobacter diazotrophicus (strain ATCC 49037 / DSM 5601 / CCUG 37298 / CIP 103539 / LMG 7603 / PAl5).